We begin with the raw amino-acid sequence, 30 residues long: Cycloviolacin-H3 (30 aa).

The cyclopeptide (Gly-Asn) cross-link spans 1–30 (GLPVCGETCFGGTCNTPGCICDPWPVCTRN). 3 disulfides stabilise this stretch: Cys-5-Cys-19, Cys-9-Cys-21, and Cys-14-Cys-27.

This is a cyclic peptide.

Functionally, probably participates in a plant defense mechanism. In Viola hederacea (Australian violet), this protein is Cycloviolacin-H3.